The following is a 110-amino-acid chain: Flagellar hook-basal body complex protein FliE (110 aa).

It belongs to the FliE family.

It is found in the bacterial flagellum basal body. The polypeptide is Flagellar hook-basal body complex protein FliE (Pseudomonas entomophila (strain L48)).